Consider the following 150-residue polypeptide: Endoribonuclease YbeY (150 aa).

Residues His116, His120, and His126 each contribute to the Zn(2+) site.

It belongs to the endoribonuclease YbeY family. Requires Zn(2+) as cofactor.

It is found in the cytoplasm. In terms of biological role, single strand-specific metallo-endoribonuclease involved in late-stage 70S ribosome quality control and in maturation of the 3' terminus of the 16S rRNA. The protein is Endoribonuclease YbeY of Beutenbergia cavernae (strain ATCC BAA-8 / DSM 12333 / CCUG 43141 / JCM 11478 / NBRC 16432 / NCIMB 13614 / HKI 0122).